Here is a 157-residue protein sequence, read N- to C-terminus: Protein NrdI (157 aa).

It belongs to the NrdI family.

Its function is as follows. Probably involved in ribonucleotide reductase function. The chain is Protein NrdI from Mycoplasma mycoides subsp. mycoides SC (strain CCUG 32753 / NCTC 10114 / PG1).